The sequence spans 111 residues: Flagellar hook-basal body complex protein FliE (111 aa).

This sequence belongs to the FliE family.

The protein resides in the bacterial flagellum basal body. The sequence is that of Flagellar hook-basal body complex protein FliE from Brucella ovis (strain ATCC 25840 / 63/290 / NCTC 10512).